The sequence spans 126 residues: uncharacterized protein (126 aa).

This is an uncharacterized protein from Xylella fastidiosa (strain 9a5c).